The following is a 220-amino-acid chain: Small ribosomal subunit protein uS3c (220 aa).

Residues 39 to 120 form the KH type-2 domain; it reads IRDFIKNYVK…KLIIDIIRIT (82 aa).

The protein belongs to the universal ribosomal protein uS3 family. Part of the 30S ribosomal subunit.

Its subcellular location is the plastid. This Epifagus virginiana (Beechdrops) protein is Small ribosomal subunit protein uS3c (rps3).